The chain runs to 109 residues: NADH-quinone oxidoreductase subunit K (109 aa).

Transmembrane regions (helical) follow at residues 12–32 (LNHY…GLFM), 40–60 (ILMS…AFSV), and 72–92 (IIIL…LLIY).

This sequence belongs to the complex I subunit 4L family. As to quaternary structure, NDH-1 is composed of 14 different subunits. Subunits NuoA, H, J, K, L, M, N constitute the membrane sector of the complex.

The protein resides in the cell inner membrane. It carries out the reaction a quinone + NADH + 5 H(+)(in) = a quinol + NAD(+) + 4 H(+)(out). Its function is as follows. NDH-1 shuttles electrons from NADH, via FMN and iron-sulfur (Fe-S) centers, to quinones in the respiratory chain. The immediate electron acceptor for the enzyme in this species is believed to be ubiquinone. Couples the redox reaction to proton translocation (for every two electrons transferred, four hydrogen ions are translocated across the cytoplasmic membrane), and thus conserves the redox energy in a proton gradient. The polypeptide is NADH-quinone oxidoreductase subunit K (Rickettsia bellii (strain RML369-C)).